The primary structure comprises 153 residues: Endoribonuclease YbeY (153 aa).

3 residues coordinate Zn(2+): H112, H116, and H122.

The protein belongs to the endoribonuclease YbeY family. It depends on Zn(2+) as a cofactor.

Its subcellular location is the cytoplasm. In terms of biological role, single strand-specific metallo-endoribonuclease involved in late-stage 70S ribosome quality control and in maturation of the 3' terminus of the 16S rRNA. In Persephonella marina (strain DSM 14350 / EX-H1), this protein is Endoribonuclease YbeY.